The chain runs to 417 residues: S-inosyl-L-homocysteine hydrolase (417 aa).

Substrate-binding residues include D124 and E149. Residue 150 to 152 (TTT) coordinates NAD(+). 2 residues coordinate substrate: K179 and D183. NAD(+) is bound by residues N184, 213-218 (GYGWCG), E236, N271, 292-294 (SGH), and N339.

It belongs to the adenosylhomocysteinase family. The cofactor is NAD(+).

It is found in the cytoplasm. The catalysed reaction is S-inosyl-L-homocysteine + H2O = L-homocysteine + inosine. Its pathway is amino-acid biosynthesis; S-adenosyl-L-methionine biosynthesis. Catalyzes the hydrolysis of S-inosyl-L-homocysteine (SIH) to L-homocysteine (Hcy) and inosine. Likely functions in a S-adenosyl-L-methionine (SAM) recycling pathway from S-adenosyl-L-homocysteine (SAH) produced from SAM-dependent methylation reactions. Can also catalyze the reverse reaction in vitro, i.e. the synthesis of SIH from Hcy and inosine. The polypeptide is S-inosyl-L-homocysteine hydrolase (Methanothermobacter thermautotrophicus (strain ATCC 29096 / DSM 1053 / JCM 10044 / NBRC 100330 / Delta H) (Methanobacterium thermoautotrophicum)).